A 131-amino-acid polypeptide reads, in one-letter code: D-ribose pyranase (131 aa).

His-20 functions as the Proton donor in the catalytic mechanism. Residues Asp-28, His-98, and 120–122 (FSN) contribute to the substrate site.

The protein belongs to the RbsD / FucU family. RbsD subfamily. As to quaternary structure, homodecamer.

It is found in the cytoplasm. It carries out the reaction beta-D-ribopyranose = beta-D-ribofuranose. It functions in the pathway carbohydrate metabolism; D-ribose degradation; D-ribose 5-phosphate from beta-D-ribopyranose: step 1/2. Its function is as follows. Catalyzes the interconversion of beta-pyran and beta-furan forms of D-ribose. This chain is D-ribose pyranase, found in Petrotoga mobilis (strain DSM 10674 / SJ95).